The sequence spans 307 residues: D-alanine--D-alanine ligase (307 aa).

The 194-residue stretch at 108–301 (KEVFAAAGLP…FPEFCAWMVE (194 aa)) folds into the ATP-grasp domain. 135 to 185 (LPPPYVVKPNCEGSSVGVYIVQADANGPPRLAPDMPRDLMVETYIPGRELT) serves as a coordination point for ATP. The Mg(2+) site is built by aspartate 252, glutamate 268, and asparagine 270.

This sequence belongs to the D-alanine--D-alanine ligase family. The cofactor is Mg(2+). Mn(2+) is required as a cofactor.

Its subcellular location is the cytoplasm. The catalysed reaction is 2 D-alanine + ATP = D-alanyl-D-alanine + ADP + phosphate + H(+). It functions in the pathway cell wall biogenesis; peptidoglycan biosynthesis. In terms of biological role, cell wall formation. This is D-alanine--D-alanine ligase from Cereibacter sphaeroides (strain ATCC 17025 / ATH 2.4.3) (Rhodobacter sphaeroides).